Here is a 247-residue protein sequence, read N- to C-terminus: 23S rRNA (guanosine-2'-O-)-methyltransferase RlmB (247 aa).

Positions 197, 217, and 226 each coordinate S-adenosyl-L-methionine.

The protein belongs to the class IV-like SAM-binding methyltransferase superfamily. RNA methyltransferase TrmH family. RlmB subfamily.

It localises to the cytoplasm. It catalyses the reaction guanosine(2251) in 23S rRNA + S-adenosyl-L-methionine = 2'-O-methylguanosine(2251) in 23S rRNA + S-adenosyl-L-homocysteine + H(+). In terms of biological role, specifically methylates the ribose of guanosine 2251 in 23S rRNA. The protein is 23S rRNA (guanosine-2'-O-)-methyltransferase RlmB of Vibrio parahaemolyticus serotype O3:K6 (strain RIMD 2210633).